Here is a 166-residue protein sequence, read N- to C-terminus: Interleukin-3 (166 aa).

The signal sequence occupies residues 1-26; that stretch reads MVLASSTTSIHTMLLLLLMLFHLGLQ. N-linked (GlcNAc...) asparagine glycosylation occurs at Asn-42. 2 disulfide bridges follow: Cys-43–Cys-106 and Cys-105–Cys-166. A glycan (N-linked (GlcNAc...) asparagine; partial) is linked at Asn-112. The interval 145–166 is disordered; it reads LTSRPPQPASGSVSPNRGTVEC.

This sequence belongs to the IL-3 family. In terms of assembly, monomer. In terms of tissue distribution, activated T-cells, mast cells, natural killer cells.

Its subcellular location is the secreted. In terms of biological role, cytokine secreted predominantly by activated T-lymphocytes as well as mast cells and osteoblastic cells that controls the production and differentiation of hematopoietic progenitor cells into lineage-restricted cells. Also stimulates mature basophils, eosinophils, and monocytes to become functionally activated. In addition, plays an important role in neural cell proliferation and survival. Participates as well in bone homeostasis and inhibits osteoclast differentiation by preventing NF-kappa-B nuclear translocation and activation. Mechanistically, exerts its biological effects through a receptor composed of IL3RA subunit and a signal transducing subunit IL3RB. Receptor stimulation results in the rapid activation of JAK2 kinase activity leading to STAT5-mediated transcriptional program. Alternatively, contributes to cell survival under oxidative stress in non-hematopoietic systems by activating pathways mediated by PI3K/AKT and ERK. This is Interleukin-3 (Il3) from Mus musculus (Mouse).